Reading from the N-terminus, the 136-residue chain is Calmodulin-A (136 aa).

EF-hand domains follow at residues 1–36 (EQIA…LGQN), 37–72 (PTEA…KMKD), 74–109 (DSEE…LGEK), and 110–136 (LTDE…EEFV). D14, D16, D18, T20, E25, D50, D52, N54, T56, E61, D87, D89, N91, Y93, and E98 together coordinate Ca(2+). Position 109 is an N6,N6,N6-trimethyllysine (K109). Residues D123, D125, D127, Q129, and E134 each coordinate Ca(2+).

This sequence belongs to the calmodulin family.

Its function is as follows. Calmodulin acts as part of a calcium signal transduction pathway by mediating the control of a large number of enzymes, ion channels, aquaporins and other proteins through calcium-binding. Calcium-binding is required for the activation of calmodulin. Among the enzymes to be stimulated by the calmodulin-calcium complex are a number of protein kinases, such as myosin light-chain kinases and calmodulin-dependent protein kinase type II (CaMK2), and phosphatases. This Oryzias latipes (Japanese rice fish) protein is Calmodulin-A (calm1).